The primary structure comprises 524 residues: Solute carrier family 35 member F5 (524 aa).

Residues 1 to 22 (MVPPRHHPGAGRPGALSSSPPF) form a disordered region. The span at 13-22 (PGALSSSPPF) shows a compositional bias: low complexity. 2 consecutive transmembrane segments (helical) span residues 69-89 (MALG…SSEL) and 101-121 (FFST…FIVW). S207 carries the post-translational modification Phosphoserine. The next 8 helical transmembrane spans lie at 244-264 (ISFF…EALS), 269-289 (AIVN…AAMF), 297-317 (FTLS…LVNL), 328-348 (TIGS…IVMI), 362-382 (MFFG…FFLL), 396-416 (VVLM…EFLW), 421-441 (FLTS…LSII), and 453-473 (WLFF…TLLC). One can recognise an EamA domain in the interval 253 to 317 (FLANFSYQEA…SIGGVVLVNL (65 aa)).

The protein belongs to the SLC35F solute transporter family.

It is found in the membrane. In terms of biological role, putative solute transporter. In Bos taurus (Bovine), this protein is Solute carrier family 35 member F5 (SLC35F5).